Consider the following 103-residue polypeptide: Large ribosomal subunit protein uL24 (103 aa).

The protein belongs to the universal ribosomal protein uL24 family. As to quaternary structure, part of the 50S ribosomal subunit.

In terms of biological role, one of two assembly initiator proteins, it binds directly to the 5'-end of the 23S rRNA, where it nucleates assembly of the 50S subunit. One of the proteins that surrounds the polypeptide exit tunnel on the outside of the subunit. In Alkaliphilus metalliredigens (strain QYMF), this protein is Large ribosomal subunit protein uL24.